The following is a 526-amino-acid chain: Probable polyol transporter 4 (526 aa).

2 disordered regions span residues 1–21 and 28–47; these read MMKN…AVSV and YQRM…AEAR. The segment covering 29–47 has biased composition (basic and acidic residues); that stretch reads QRMDSDAEESQNHREAEAR. Transmembrane regions (helical) follow at residues 63–83, 92–112, 125–145, 153–173, 180–200, 215–235, 300–320, 340–360, 371–391, 395–415, 437–457, and 465–485; these read SLNN…VLFI, VQTE…SLAG, MALA…APSF, TLAG…IAEI, GFFT…GYVS, IMLA…CVIP, MLIV…DATV, AATV…TFLI, VSTI…TFLG, LGIT…SIGM, ALGA…FLSV, and GTFF…YVLV.

The protein belongs to the major facilitator superfamily. Sugar transporter (TC 2.A.1.1) family.

Its subcellular location is the membrane. Functionally, plasma membrane sugar-proton symporter. This chain is Probable polyol transporter 4 (PLT4), found in Arabidopsis thaliana (Mouse-ear cress).